The following is a 203-amino-acid chain: Tic20 family protein Ycf60 (203 aa).

The next 5 helical transmembrane spans lie at 2–22, 51–71, 84–104, 131–151, and 153–173; these read IRLF…RLAL, TVPY…YVLP, IILP…VTFF, ILLF…PIEF, and ISFL…STIT.

The protein belongs to the Tic20 family.

Its subcellular location is the plastid. It is found in the chloroplast membrane. This chain is Tic20 family protein Ycf60 (ycf60), found in Pyropia yezoensis (Susabi-nori).